Reading from the N-terminus, the 184-residue chain is Nucleoside triphosphate pyrophosphatase (184 aa).

The Proton acceptor role is filled by D71.

The protein belongs to the Maf family. A divalent metal cation is required as a cofactor.

The protein localises to the cytoplasm. It catalyses the reaction a ribonucleoside 5'-triphosphate + H2O = a ribonucleoside 5'-phosphate + diphosphate + H(+). The catalysed reaction is a 2'-deoxyribonucleoside 5'-triphosphate + H2O = a 2'-deoxyribonucleoside 5'-phosphate + diphosphate + H(+). Its function is as follows. Nucleoside triphosphate pyrophosphatase. May have a dual role in cell division arrest and in preventing the incorporation of modified nucleotides into cellular nucleic acids. This is Nucleoside triphosphate pyrophosphatase from Synechococcus sp. (strain CC9605).